The chain runs to 410 residues: Peptidase T (410 aa).

His78 contacts Zn(2+). The active site involves Asp80. Asp140 contributes to the Zn(2+) binding site. Glu174 functions as the Proton acceptor in the catalytic mechanism. 3 residues coordinate Zn(2+): Glu175, Asp197, and His379.

The protein belongs to the peptidase M20B family. Requires Zn(2+) as cofactor.

Its subcellular location is the cytoplasm. It carries out the reaction Release of the N-terminal residue from a tripeptide.. In terms of biological role, cleaves the N-terminal amino acid of tripeptides. The chain is Peptidase T from Staphylococcus saprophyticus subsp. saprophyticus (strain ATCC 15305 / DSM 20229 / NCIMB 8711 / NCTC 7292 / S-41).